The following is a 221-amino-acid chain: PKHD-type hydroxylase A9601_13531 (221 aa).

In terms of domain architecture, Fe2OG dioxygenase spans 80–174 (LIHGIMFTKS…RIVCVGWIES (95 aa)). Residues histidine 98, aspartate 100, and histidine 155 each coordinate Fe cation. Arginine 165 lines the 2-oxoglutarate pocket.

Requires Fe(2+) as cofactor. L-ascorbate is required as a cofactor.

This chain is PKHD-type hydroxylase A9601_13531, found in Prochlorococcus marinus (strain AS9601).